Here is a 460-residue protein sequence, read N- to C-terminus: uncharacterized protein (460 aa).

Residues 5 to 63 (TWHQGELIEVAIADLSDTGDGVGRFAERVVFVPDTVPGDRVLVRLLHVKPNYAHGKLHQ) form the TRAM domain. [4Fe-4S] cluster-binding residues include cysteine 76, cysteine 82, cysteine 85, and cysteine 164. S-adenosyl-L-methionine contacts are provided by glutamine 288, tyrosine 317, glutamate 338, and aspartate 383. The Nucleophile role is filled by cysteine 410.

Belongs to the class I-like SAM-binding methyltransferase superfamily. RNA M5U methyltransferase family.

This is an uncharacterized protein from Nostoc sp. (strain PCC 7120 / SAG 25.82 / UTEX 2576).